A 92-amino-acid polypeptide reads, in one-letter code: Acylphosphatase (92 aa).

A disulfide bridge links cysteine 5 with cysteine 49. In terms of domain architecture, Acylphosphatase-like spans 5–92; the sequence is CIIAWIYGRV…SGELTDFRIR (88 aa). Active-site residues include arginine 20 and asparagine 38.

The protein belongs to the acylphosphatase family.

The enzyme catalyses an acyl phosphate + H2O = a carboxylate + phosphate + H(+). The sequence is that of Acylphosphatase from Shigella boydii serotype 4 (strain Sb227).